The chain runs to 239 residues: tRNA (guanine-N(7)-)-methyltransferase (239 aa).

S-adenosyl-L-methionine is bound by residues E69, E94, D121, and D144. Residue D144 is part of the active site. Residue K148 coordinates substrate. Residues 150–155 (RHNKRR) form an interaction with RNA region. Substrate contacts are provided by residues D180 and 217–220 (TKFE).

The protein belongs to the class I-like SAM-binding methyltransferase superfamily. TrmB family. Monomer.

The catalysed reaction is guanosine(46) in tRNA + S-adenosyl-L-methionine = N(7)-methylguanosine(46) in tRNA + S-adenosyl-L-homocysteine. The protein operates within tRNA modification; N(7)-methylguanine-tRNA biosynthesis. Functionally, catalyzes the formation of N(7)-methylguanine at position 46 (m7G46) in tRNA. This Yersinia pestis (strain Pestoides F) protein is tRNA (guanine-N(7)-)-methyltransferase.